The primary structure comprises 113 residues: Ribonuclease P protein component (113 aa).

This sequence belongs to the RnpA family. Consists of a catalytic RNA component (M1 or rnpB) and a protein subunit.

It carries out the reaction Endonucleolytic cleavage of RNA, removing 5'-extranucleotides from tRNA precursor.. Its function is as follows. RNaseP catalyzes the removal of the 5'-leader sequence from pre-tRNA to produce the mature 5'-terminus. It can also cleave other RNA substrates such as 4.5S RNA. The protein component plays an auxiliary but essential role in vivo by binding to the 5'-leader sequence and broadening the substrate specificity of the ribozyme. The sequence is that of Ribonuclease P protein component from Ureaplasma parvum serovar 3 (strain ATCC 27815 / 27 / NCTC 11736).